Here is a 480-residue protein sequence, read N- to C-terminus: NADH-quinone oxidoreductase subunit N (480 aa).

A run of 14 helical transmembrane segments spans residues 12–32, 41–61, 80–100, 105–125, 130–150, 165–185, 204–224, 237–257, 275–295, 300–320, 326–346, 372–392, 406–428, and 450–470; these read LLIP…LGVF, LVQW…LFLV, FSKT…MPYL, LGKI…MMMV, LIAM…LAAF, FVLG…VYGF, IGLT…VSAA, APTP…IVLL, VIWM…LTQQ, LMAY…AAAS, ALLV…ATIL, GWSM…VGFF, LMIL…LRIV, and IARI…WLVF.

It belongs to the complex I subunit 2 family. In terms of assembly, NDH-1 is composed of 14 different subunits. Subunits NuoA, H, J, K, L, M, N constitute the membrane sector of the complex.

Its subcellular location is the cell inner membrane. It carries out the reaction a quinone + NADH + 5 H(+)(in) = a quinol + NAD(+) + 4 H(+)(out). Its function is as follows. NDH-1 shuttles electrons from NADH, via FMN and iron-sulfur (Fe-S) centers, to quinones in the respiratory chain. The immediate electron acceptor for the enzyme in this species is believed to be ubiquinone. Couples the redox reaction to proton translocation (for every two electrons transferred, four hydrogen ions are translocated across the cytoplasmic membrane), and thus conserves the redox energy in a proton gradient. In Maricaulis maris (strain MCS10) (Caulobacter maris), this protein is NADH-quinone oxidoreductase subunit N.